The following is a 356-amino-acid chain: MKELVNILDFLPEELGEKIKPMFRVKQIYQWIYQKYANNFSDMSSLPKDLRLELAQNFHFSPVKCVKNEQSKDGSIKYLFELIDGLRVESVLLPMKKEKINTEGKRISHARYTICVSSQVGCKSGCSFCLTAKGGLKRNLSTGEIVGQILWIKKQNNIPYERRVNIVYMGMGEPLDNLKNVSKAVKILAQNDGLAISPRRQTISTSGLAKQIKELGQMNLGVLLAISLHAVNDELRTELMPINKAYNIAAIMDAVREFPIDQRKRVMFEYLLIDGINDKLEHAKELVKLLNGIKAKVNLILFNPHEGSLYKRPSLENAIKFQDLLSNKGVTCTIRESKGLDISAACGQLKERAKEQ.

Residue glutamate 89 is the Proton acceptor of the active site. The region spanning 108–341 (SHARYTICVS…CTIRESKGLD (234 aa)) is the Radical SAM core domain. A disulfide bond links cysteine 115 and cysteine 346. [4Fe-4S] cluster contacts are provided by cysteine 122, cysteine 126, and cysteine 129. S-adenosyl-L-methionine contacts are provided by residues 172 to 173 (GE), serine 204, 227 to 229 (SLH), and asparagine 303. The active-site S-methylcysteine intermediate is cysteine 346.

It belongs to the radical SAM superfamily. RlmN family. [4Fe-4S] cluster serves as cofactor.

The protein resides in the cytoplasm. The catalysed reaction is adenosine(2503) in 23S rRNA + 2 reduced [2Fe-2S]-[ferredoxin] + 2 S-adenosyl-L-methionine = 2-methyladenosine(2503) in 23S rRNA + 5'-deoxyadenosine + L-methionine + 2 oxidized [2Fe-2S]-[ferredoxin] + S-adenosyl-L-homocysteine. It catalyses the reaction adenosine(37) in tRNA + 2 reduced [2Fe-2S]-[ferredoxin] + 2 S-adenosyl-L-methionine = 2-methyladenosine(37) in tRNA + 5'-deoxyadenosine + L-methionine + 2 oxidized [2Fe-2S]-[ferredoxin] + S-adenosyl-L-homocysteine. Functionally, specifically methylates position 2 of adenine 2503 in 23S rRNA and position 2 of adenine 37 in tRNAs. m2A2503 modification seems to play a crucial role in the proofreading step occurring at the peptidyl transferase center and thus would serve to optimize ribosomal fidelity. The protein is Dual-specificity RNA methyltransferase RlmN of Campylobacter jejuni subsp. jejuni serotype O:23/36 (strain 81-176).